The primary structure comprises 776 residues: Glucocorticoid receptor (776 aa).

Residues 1–11 are compositionally biased toward polar residues; it reads MDSKESLTSPS. The interval 1–25 is disordered; it reads MDSKESLTSPSEEIPSSVHGQERGN. A modulating region spans residues 1–419; the sequence is MDSKESLTSP…LSAVGPPPKF (419 aa). At Thr-8 the chain carries Phosphothreonine. Position 23 is an omega-N-methylarginine (Arg-23). Ser-45, Ser-113, and Ser-134 each carry phosphoserine. The disordered stretch occupies residues 157-178; the sequence is PETPSDVSSEQQNLKGQTGTNG. A compositionally biased stretch (polar residues) spans 161–174; it reads SDVSSEQQNLKGQT. 3 positions are modified to phosphoserine: Ser-203, Ser-211, and Ser-226. A Glycyl lysine isopeptide (Lys-Gly) (interchain with G-Cter in SUMO2) cross-link involves residue Lys-258. Position 267 is a phosphoserine (Ser-267). Glycyl lysine isopeptide (Lys-Gly) (interchain with G-Cter in SUMO); alternate cross-links involve residues Lys-277 and Lys-293. Residues Lys-277 and Lys-293 each participate in a glycyl lysine isopeptide (Lys-Gly) (interchain with G-Cter in SUMO2); alternate cross-link. Ser-307 and Ser-404 each carry phosphoserine. A DNA-binding region (nuclear receptor) is located at residues 417–492; the sequence is PKFCLVCSDE…AGMNLEARKT (76 aa). Residue Lys-418 forms a Glycyl lysine isopeptide (Lys-Gly) (interchain with G-Cter in ubiquitin) linkage. 2 NR C4-type zinc fingers span residues 420–440 and 456–480; these read CLVC…CGSC and CAGR…YRKC. N6-acetyllysine occurs at positions 479, 491, 493, and 494. The segment at 484-776 is interaction with CLOCK; that stretch reads GMNLEARKTK…NIKKLLFHQK (293 aa). Residues 486 to 522 are hinge; that stretch reads NLEARKTKKKIKGIQQTTTGISQETPENSANKTIVPA. The NR LBD domain maps to 523–757; sequence TLPQLTPTPV…FPEMLAEIIT (235 aa). Residues 531–696 form an interaction with CRY1 region; the sequence is PVSLLEVIEP…EIRMTYIKEL (166 aa). Lys-702 is covalently cross-linked (Glycyl lysine isopeptide (Lys-Gly) (interchain with G-Cter in SUMO)).

Belongs to the nuclear hormone receptor family. NR3 subfamily. Heteromultimeric cytoplasmic complex with HSP90AA1, HSPA1A/HSPA1B, and FKBP5 or another immunophilin such as PPID, STIP1, or the immunophilin homolog PPP5C. Upon ligand binding FKBP5 dissociates from the complex and FKBP4 takes its place, thereby linking the complex to dynein and mediating transport to the nucleus, where the complex dissociates. Probably forms a complex composed of chaperones HSP90 and HSP70, co-chaperones CDC37, PPP5C, TSC1 and client protein TSC2, CDK4, AKT, RAF1 and NR3C1; this complex does not contain co-chaperones STIP1/HOP and PTGES3/p23. Directly interacts with UNC45A. Binds to DNA as a homodimer, and as heterodimer with NR3C2 or the retinoid X receptor. Binds STAT5A and STAT5B homodimers and heterodimers. Interacts with NRIP1, POU2F1, POU2F2 and TRIM28. Interacts with several coactivator complexes, including the SMARCA4 complex, CREBBP/EP300, TADA2L (Ada complex) and p160 coactivators such as NCOA2 and NCOA6. Interaction with BAG1 inhibits transactivation. Interacts with HEXIM1 and TGFB1I1. Interacts with NCOA1. Interacts with NCOA3, SMARCA4, SMARCC1, SMARCD1, and SMARCE1. Interacts with CLOCK, CRY1 and CRY2 in a ligand-dependent fashion. Interacts with CIART. Interacts with RWDD3. Interacts with UBE2I/UBC9 and this interaction is enhanced in the presence of RWDD3. Interacts with GRIP1. Interacts with NR4A3 (via nuclear receptor DNA-binding domain), represses transcription activity of NR4A3 on the POMC promoter Nur response element (NurRE). Directly interacts with PNRC2 to attract and form a complex with UPF1 and DCP1A; the interaction leads to rapid mRNA degradation. Interacts with GSK3B. Interacts with FNIP1 and FNIP2. Interacts (via C-terminus) with NR3C1 (via C-terminus). Interacts with MCM3AP. Interacts (via domain NR LBD) with HSP90AA1 and HSP90AB1. In the absence of hormonal ligand, interacts with TACC1. Post-translationally, acetylation by CLOCK reduces its binding to glucocorticoid response elements and its transcriptional activity. Increased proteasome-mediated degradation in response to glucocorticoids. In terms of processing, phosphorylated in the absence of hormone; becomes hyperphosphorylated in the presence of glucocorticoid. The Ser-203, Ser-226 and Ser-404-phosphorylated forms are mainly cytoplasmic, and the Ser-211-phosphorylated form is nuclear. Phosphorylation at Ser-211 increases transcriptional activity. Phosphorylation at Ser-203, Ser-226 and Ser-404 decreases signaling capacity. Phosphorylation at Ser-404 may protect from glucocorticoid-induced apoptosis. Phosphorylation at Ser-203 and Ser-211 is not required in regulation of chromosome segregation. May be dephosphorylated by PPP5C, attenuates NR3C1 action. Post-translationally, sumoylation at Lys-277 and Lys-293 negatively regulates its transcriptional activity. Sumoylation at Lys-702 positively regulates its transcriptional activity in the presence of RWDD3. Sumoylation at Lys-277 and Lys-293 is dispensable whereas sumoylation at Lys-702 is critical for the stimulatory effect of RWDD3 on its transcriptional activity. Heat shock increases sumoylation in a RWDD3-dependent manner. Ubiquitinated by UBR5, leading to its degradation: UBR5 specifically recognizes and binds ligand-bound NR3C1 when it is not associated with coactivators (NCOAs). In presence of NCOAs, the UBR5-degron is not accessible, preventing its ubiquitination and degradation.

Its subcellular location is the cytoplasm. It is found in the nucleus. The protein resides in the mitochondrion. It localises to the cytoskeleton. The protein localises to the spindle. Its subcellular location is the microtubule organizing center. It is found in the centrosome. The protein resides in the chromosome. It localises to the nucleoplasm. Receptor for glucocorticoids (GC). Has a dual mode of action: as a transcription factor that binds to glucocorticoid response elements (GRE), both for nuclear and mitochondrial DNA, and as a modulator of other transcription factors. Affects inflammatory responses, cellular proliferation and differentiation in target tissues. Involved in chromatin remodeling. Plays a role in rapid mRNA degradation by binding to the 5' UTR of target mRNAs and interacting with PNRC2 in a ligand-dependent manner which recruits the RNA helicase UPF1 and the mRNA-decapping enzyme DCP1A, leading to RNA decay. Could act as a coactivator for STAT5-dependent transcription upon growth hormone (GH) stimulation and could reveal an essential role of hepatic GR in the control of body growth. Mediates glucocorticoid-induced apoptosis. Promotes accurate chromosome segregation during mitosis. May act as a tumor suppressor. May play a negative role in adipogenesis through the regulation of lipolytic and antilipogenic gene expression. This chain is Glucocorticoid receptor (NR3C1), found in Tupaia belangeri (Common tree shrew).